The chain runs to 329 residues: DNA-directed RNA polymerase subunit alpha (329 aa).

The alpha N-terminal domain (alpha-NTD) stretch occupies residues 1 to 235; it reads MQGSVTEFLK…EQLDAFVDLR (235 aa). The interval 249-329 is alpha C-terminal domain (alpha-CTD); it reads FDPILLRPVD…NWPPASIAED (81 aa).

The protein belongs to the RNA polymerase alpha chain family. Homodimer. The RNAP catalytic core consists of 2 alpha, 1 beta, 1 beta' and 1 omega subunit. When a sigma factor is associated with the core the holoenzyme is formed, which can initiate transcription.

It carries out the reaction RNA(n) + a ribonucleoside 5'-triphosphate = RNA(n+1) + diphosphate. Its function is as follows. DNA-dependent RNA polymerase catalyzes the transcription of DNA into RNA using the four ribonucleoside triphosphates as substrates. In Actinobacillus succinogenes (strain ATCC 55618 / DSM 22257 / CCUG 43843 / 130Z), this protein is DNA-directed RNA polymerase subunit alpha.